Consider the following 305-residue polypeptide: Protein hrde-2 (305 aa).

Disordered stretches follow at residues 211-233 (AEMVPSNTTGSSGSPMSTAPVPA) and 267-305 (EMSNDEYSPDESENDENEYDYENAARYDDGYDEGHEYCQ). Polar residues predominate over residues 215 to 227 (PSNTTGSSGSPMS). Over residues 268-287 (MSNDEYSPDESENDENEYDY) the composition is skewed to acidic residues. The span at 289 to 305 (NAARYDDGYDEGHEYCQ) shows a compositional bias: basic and acidic residues.

Expressed throughout the male and female germline.

It localises to the nucleus. In terms of biological role, plays a role in germline RNA interference (RNAi), and in particular is required for piwi-interacting RNA (piRNA) gene silencing. Facilitates the binding of the argonaut protein hrde-1 to small interfering RNAs (siRNAs) targets that are required for transgenerational epigenetic inheritance and germline immortality. The sequence is that of Protein hrde-2 from Caenorhabditis elegans.